Here is a 246-residue protein sequence, read N- to C-terminus: MSGHSKWHNIQAKKGKADAKRGKIFTKIGKEIVVAVKQGGPSADSNPRLRDVIAKAKANNMPNDTIERSIKKASGELNAVDYETITYEGYGPAGIAVLVDVLTDNKNRSAGNVRYAFTKQGGNMGSTGCVSFMFQSKGQIVIEKKDGLDEDELMMMALDAGAEDFESEDEVYVVATSQEDFGTVREALEAEGLEFLEAEIKMVPDTYTAIDEDTATKFQKMLDVLEDDDDVQNVYHNAEFPEGWEE.

This sequence belongs to the TACO1 family.

The protein resides in the cytoplasm. The sequence is that of Probable transcriptional regulatory protein CLD_1467 from Clostridium botulinum (strain Okra / Type B1).